The sequence spans 498 residues: Germ cell-less protein-like 2 (498 aa).

Residues 33 to 39 carry the Nuclear localization signal motif; it reads SRKRKRN. The 71-residue stretch at 90-160 folds into the BTB domain; sequence SDIKIRALGR…LYTDADLSIT (71 aa).

In terms of assembly, interacts with CUL3.

The protein localises to the nucleus matrix. Its pathway is protein modification; protein ubiquitination. Its function is as follows. Possible function in spermatogenesis. Probable substrate-specific adapter of an E3 ubiquitin-protein ligase complex which mediates the ubiquitination and subsequent proteasomal degradation of target proteins. The protein is Germ cell-less protein-like 2 (Gmcl2) of Mus musculus (Mouse).